Here is a 502-residue protein sequence, read N- to C-terminus: Ribose import ATP-binding protein RbsA (502 aa).

2 consecutive ABC transporter domains span residues 3–239 (VTMR…VGRE) and 249–493 (AAPG…TGGA). 35 to 42 (GENGAGKS) is a binding site for ATP.

The protein belongs to the ABC transporter superfamily. Ribose importer (TC 3.A.1.2.1) family. In terms of assembly, the complex is composed of an ATP-binding protein (RbsA), two transmembrane proteins (RbsC) and a solute-binding protein (RbsB).

It is found in the cell inner membrane. The enzyme catalyses D-ribose(out) + ATP + H2O = D-ribose(in) + ADP + phosphate + H(+). In terms of biological role, part of the ABC transporter complex RbsABC involved in ribose import. Responsible for energy coupling to the transport system. The chain is Ribose import ATP-binding protein RbsA from Chromobacterium violaceum (strain ATCC 12472 / DSM 30191 / JCM 1249 / CCUG 213 / NBRC 12614 / NCIMB 9131 / NCTC 9757 / MK).